We begin with the raw amino-acid sequence, 582 residues long: Acylamino-acid-releasing enzyme (582 aa).

Active-site charge relay system residues include S445, D524, and H556.

Belongs to the peptidase S9C family.

It localises to the cytoplasm. It catalyses the reaction Cleavage of an N-acetyl or N-formyl amino acid from the N-terminus of a polypeptide.. This enzyme catalyzes the hydrolysis of the N-terminal peptide bond of an N-acetylated peptide to generate an N-acetylated amino acid and a peptide with a free N-terminus. The chain is Acylamino-acid-releasing enzyme from Aeropyrum pernix (strain ATCC 700893 / DSM 11879 / JCM 9820 / NBRC 100138 / K1).